The chain runs to 396 residues: Tryptophan synthase beta chain (396 aa).

The residue at position 88 (K88) is an N6-(pyridoxal phosphate)lysine.

Belongs to the TrpB family. Tetramer of two alpha and two beta chains. Requires pyridoxal 5'-phosphate as cofactor.

The catalysed reaction is (1S,2R)-1-C-(indol-3-yl)glycerol 3-phosphate + L-serine = D-glyceraldehyde 3-phosphate + L-tryptophan + H2O. It participates in amino-acid biosynthesis; L-tryptophan biosynthesis; L-tryptophan from chorismate: step 5/5. Functionally, the beta subunit is responsible for the synthesis of L-tryptophan from indole and L-serine. This is Tryptophan synthase beta chain from Actinobacillus pleuropneumoniae serotype 7 (strain AP76).